A 580-amino-acid chain; its full sequence is Frizzled-10-B (580 aa).

Positions 1-20 are cleaved as a signal peptide; that stretch reads MEPRVVTALLLSLAAALCSG. Topologically, residues 21 to 224 are extracellular; that stretch reads ISSINPDRSG…DVYWSKNDKK (204 aa). The FZ domain occupies 29–150; that stretch reads SGEGRCQAIE…NDPNYLCMEA (122 aa). 5 disulfide bridges follow: Cys-34–Cys-95, Cys-42–Cys-88, Cys-79–Cys-117, Cys-106–Cys-147, and Cys-110–Cys-134. Asn-48 carries an N-linked (GlcNAc...) asparagine glycan. The N-linked (GlcNAc...) asparagine glycan is linked to Asn-153. The disordered stretch occupies residues 173–194; the sequence is RPNSGHEMYPKDPKGRSSCENS. The segment covering 180-189 has biased composition (basic and acidic residues); it reads MYPKDPKGRS. Residues 225–245 form a helical membrane-spanning segment; it reads FAFIWIAIWSLLCFFSSAFTV. Residues 246-261 lie on the Cytoplasmic side of the membrane; sequence LTFLVDPLRFKYPERP. A helical membrane pass occupies residues 262-282; that stretch reads IIFLSMCYCVYSVGYIIRLFA. Residues 283-309 lie on the Extracellular side of the membrane; the sequence is GADSIACDRDSGQLYVIQEGLESTGCT. The chain crosses the membrane as a helical span at residues 310–330; the sequence is IVFLILYYFGMASSLWWVILT. The Cytoplasmic portion of the chain corresponds to 331–350; the sequence is LTWFLAAGKKWGHEAIEANS. Residues 351-371 form a helical membrane-spanning segment; sequence SYFHLAAWAIPAVKTIMILVM. The Extracellular portion of the chain corresponds to 372-392; sequence RRVAGDELTGVCYVGSMDVNA. The chain crosses the membrane as a helical span at residues 393–413; sequence LTGFVLIPLACYLIIGTSFIL. Residues 414–442 lie on the Cytoplasmic side of the membrane; that stretch reads SGFVALFHIRRVMKTGGENTDKLEKLMVR. The chain crosses the membrane as a helical span at residues 443 to 463; the sequence is IGVFSVLYTVPATCVIACYFY. Topologically, residues 464–501 are extracellular; the sequence is ERLNMDFWKILATQDKCKMDSQTKTLDCTMTSSIPAVE. The chain crosses the membrane as a helical span at residues 502–522; it reads IFMVKIFMLLVVGITSGMWIW. At 523-580 the chain is on the cytoplasmic side; that stretch reads TSKTVQSWQNVFSKSLKKRNRNKPASVITSAGIYKKPQQPPKIHHGKYESALRSPTCV. Positions 525-530 match the Lys-Thr-X-X-X-Trp motif, mediates interaction with the PDZ domain of Dvl family members motif; the sequence is KTVQSW. The interval 558-580 is disordered; that stretch reads KPQQPPKIHHGKYESALRSPTCV. A PDZ-binding motif is present at residues 578–580; the sequence is TCV.

This sequence belongs to the G-protein coupled receptor Fz/Smo family. As to expression, expressed in liver, lung, brain, testis, heart and ovary.

Its subcellular location is the cell membrane. In terms of biological role, receptor for Wnt proteins. Most of frizzled receptors are coupled to the beta-catenin canonical signaling pathway, which leads to the activation of disheveled proteins, inhibition of GSK-3 kinase, nuclear accumulation of beta-catenin and activation of Wnt target genes. A second signaling pathway involving PKC and calcium fluxes has been seen for some family members, but it is not yet clear if it represents a distinct pathway or if it can be integrated in the canonical pathway, as PKC seems to be required for Wnt-mediated inactivation of GSK-3 kinase. Both pathways seem to involve interactions with G-proteins. May be involved in transduction and intercellular transmission of polarity information during tissue morphogenesis and/or in differentiated tissues. Activated by Wnt8. Could have an antagonizing activity in the morphogenesis during development. In Xenopus laevis (African clawed frog), this protein is Frizzled-10-B (fzd10-b).